The chain runs to 249 residues: Vacuolar iron transporter 1 (249 aa).

Residues 1 to 36 are Cytoplasmic-facing; sequence MADGANDGGNPGAEEQQRLLDQHKEAHFTAGEIVRD. Residues 37 to 57 traverse the membrane as a helical segment; it reads IIIGVSDGLTVPFALAAGLSG. The Vacuolar segment spans residues 58–63; that stretch reads ANASSS. A helical transmembrane segment spans residues 64-84; it reads IVLTAGIAEVAAGAISMGLGG. Over 85–170 the chain is Cytoplasmic; that stretch reads YLAAKSEADN…PKRALQSAFT (86 aa). Residues 90–165 form a cytoplasmic metal binding domain (MBD) region; sequence SEADNYAREL…LEKPDPKRAL (76 aa). The Fe cation site is built by Glu102, Glu105, Glu113, Glu116, Met149, and Glu153. A helical membrane pass occupies residues 171–191; it reads IAIAYVLGGLVPLIPYMFIPV. Topologically, residues 192-194 are vacuolar; it reads ARK. Residues 195–215 form a helical membrane-spanning segment; that stretch reads AVVASVILTLMALLIFGYAKG. Over 216–226 the chain is Cytoplasmic; it reads YFTDNKPFKSA. The helical transmembrane segment at 227-247 threads the bilayer; it reads LQTALIGAIASAAAFGMAKAV. At 248-249 the chain is on the vacuolar side; it reads QS.

Belongs to the CCC1 family. In terms of assembly, homodimer. The dimeric interaction is mediated by both the transmembrane domains (TMDs) and the cytoplasmic metal binding domain (MBD).

It localises to the vacuole membrane. It catalyses the reaction Fe(2+)(in) = Fe(2+)(out). Its activity is regulated as follows. Transport of iron ions is inhibited by zinc ions. Vacuolar iron transporter involved in the transfer of iron ions from the cytosol to the vacuole for intracellular iron storage. Can transport cobalt ions from the cytosol to the vacuole. This is Vacuolar iron transporter 1 from Eucalyptus grandis (Flooded gum).